A 418-amino-acid polypeptide reads, in one-letter code: Endoglucanase EG-II (418 aa).

Residues 1-21 form the signal peptide; sequence MNKSVAPLLLAASILYGGAAA. Gln22 bears the Pyrrolidone carboxylic acid mark. The CBM1 domain occupies 22 to 57; sequence QQTVWGQCGGIGWSGPTNCAPGSACSTLNPYYAQCI. Residues 58-91 form a linker region; that stretch reads PGATTITTSTRPPSGPTTTTRATSTSSSTPPTSS. The disordered stretch occupies residues 63 to 91; sequence ITTSTRPPSGPTTTTRATSTSSSTPPTSS. Positions 92–418 are catalytic; that stretch reads GVRFAGVNIA…SLVSSCLARK (327 aa). A disulfide bond links Cys107 and Cys113. The N-linked (GlcNAc) asparagine glycan is linked to Asn124. Cys183 and Cys190 are disulfide-bonded. Residue Glu239 is the Proton donor/acceptor of the active site. 2 disulfide bridges follow: Cys323–Cys359 and Cys364–Cys414. Glu350 acts as the Nucleophile in catalysis.

Belongs to the glycosyl hydrolase 5 (cellulase A) family.

The protein resides in the secreted. It catalyses the reaction Endohydrolysis of (1-&gt;4)-beta-D-glucosidic linkages in cellulose, lichenin and cereal beta-D-glucans.. Functionally, endoglucanase (EG) that cleaves the internal beta-1,4-glucosidic bonds in cellulose. The degradation of cellulose involves an interplay between different cellulolytic enzymes. Hydrolysis starts with EGs, which cut internal glycosidic linkages to reduce the polymerization degree of the substrate and creates new chain ends for exocellobiohydrolases (CBHs). The CBH release the disaccharide cellobiose from the non-reducing end of the cellulose polymer chain. Finally, beta-1,4-glucosidases hydrolyze the cellobiose and other short cello-oligosaccharides into glucose units. The protein is Endoglucanase EG-II (egl2) of Hypocrea jecorina (strain ATCC 56765 / BCRC 32924 / NRRL 11460 / Rut C-30) (Trichoderma reesei).